A 178-amino-acid chain; its full sequence is Ribosome maturation factor RimP (178 aa).

This sequence belongs to the RimP family.

The protein resides in the cytoplasm. Functionally, required for maturation of 30S ribosomal subunits. The polypeptide is Ribosome maturation factor RimP (Caulobacter vibrioides (strain ATCC 19089 / CIP 103742 / CB 15) (Caulobacter crescentus)).